The sequence spans 469 residues: Glutamine synthetase (469 aa).

A GS beta-grasp domain is found at 14–99 (NDVKFVDLRF…FCDILDPVSG (86 aa)). The region spanning 106-469 (PRGTAKKAEA…PVEFDMYYSV (364 aa)) is the GS catalytic domain. 2 residues coordinate Mg(2+): glutamate 131 and glutamate 133. Glutamate 209 contributes to the ATP binding site. Residues glutamate 214 and glutamate 221 each contribute to the Mg(2+) site. Residues 265-266 (NG) and glycine 266 each bind L-glutamate. Histidine 270 contributes to the Mg(2+) binding site. Residues 272-274 (HLS) and serine 274 contribute to the ATP site. L-glutamate-binding residues include arginine 322, glutamate 328, and arginine 340. 3 residues coordinate ATP: arginine 340, arginine 345, and lysine 353. Glutamate 358 is a binding site for Mg(2+). Arginine 360 serves as a coordination point for L-glutamate. The residue at position 398 (tyrosine 398) is an O-AMP-tyrosine.

The protein belongs to the glutamine synthetase family. In terms of assembly, oligomer of 12 subunits arranged in the form of two hexameric ring. It depends on Mg(2+) as a cofactor.

The protein resides in the cytoplasm. The enzyme catalyses L-glutamate + NH4(+) + ATP = L-glutamine + ADP + phosphate + H(+). Its activity is regulated as follows. The activity of this enzyme could be controlled by adenylation under conditions of abundant glutamine. In terms of biological role, catalyzes the ATP-dependent biosynthesis of glutamine from glutamate and ammonia. This chain is Glutamine synthetase, found in Rhizobium meliloti (strain 1021) (Ensifer meliloti).